The sequence spans 261 residues: Short chain dehydrogenase/reductase astE (261 aa).

Ile24, Asp70, Asn97, and Lys131 together coordinate NADP(+). Catalysis depends on proton donor residues Ser150 and Tyr164. NADP(+) is bound by residues Tyr164, Lys168, Val197, and Thr199. The Lowers pKa of active site Tyr role is filled by Lys168.

Belongs to the short-chain dehydrogenases/reductases (SDR) family.

It functions in the pathway secondary metabolite biosynthesis; terpenoid biosynthesis. Functionally, short chain dehydrogenase/reductase; part of the gene cluster that mediates the biosynthesis of astellolides, drimane-type sesquiterpene esters that show antimicrobial, anti-inflammatory, and anti-tumor activities. The first step in astellolide biosynthesis is performed by the sesquiterpene cyclase astC that catalyzes the formation of drimanyl pyrophosphate from farnesyl pyrophosphate. Drimanyl pyrophosphate is then dephosphorylated by the sesquiterpene phosphatase astI to produce drimanyl monophosphate which is further dephosphorylated to drim-8-ene-11-ol by atsK. Drim-8-ene-11-ol is converted to confertifolin, probably by the cytochrome P450 monooxygenase astD and/or the dehydrogenase astE. The cytochrome P450 monooxygenases astB, astF and astJ then hydroxylate confertifolin at C6, C14, or C15 to form trihydroxy confertifolin. The nonribosomal peptide synthetase astA catalyzes ester bond formation between trihydroxy contifolin and benzoic acid (BA) or 4-hydroxy benzoic acid (4HBA), leading to the formation of dideacetyl astellolides A and B, respectively. Finally, the O-acetyltransferase astG converts dideacetyl astellolides A and B into deacetyl astellolides A and B. In Aspergillus oryzae (strain ATCC 42149 / RIB 40) (Yellow koji mold), this protein is Short chain dehydrogenase/reductase astE.